The primary structure comprises 278 residues: Elongation factor Ts 2, mitochondrial (278 aa).

The protein belongs to the EF-Ts family.

It is found in the mitochondrion. In terms of biological role, associates with the EF-Tu.GDP complex and induces the exchange of GDP to GTP. It remains bound to the aminoacyl-tRNA.EF-Tu.GTP complex up to the GTP hydrolysis stage on the ribosome. This is Elongation factor Ts 2, mitochondrial from Trypanosoma cruzi (strain CL Brener).